The chain runs to 211 residues: Nucleoside triphosphate pyrophosphatase (211 aa).

The active-site Proton acceptor is the aspartate 76.

It belongs to the Maf family. A divalent metal cation is required as a cofactor.

The protein localises to the cytoplasm. It catalyses the reaction a ribonucleoside 5'-triphosphate + H2O = a ribonucleoside 5'-phosphate + diphosphate + H(+). It carries out the reaction a 2'-deoxyribonucleoside 5'-triphosphate + H2O = a 2'-deoxyribonucleoside 5'-phosphate + diphosphate + H(+). Functionally, nucleoside triphosphate pyrophosphatase. May have a dual role in cell division arrest and in preventing the incorporation of modified nucleotides into cellular nucleic acids. The protein is Nucleoside triphosphate pyrophosphatase of Saccharopolyspora erythraea (strain ATCC 11635 / DSM 40517 / JCM 4748 / NBRC 13426 / NCIMB 8594 / NRRL 2338).